The sequence spans 98 residues: NADH-ubiquinone oxidoreductase chain 4L (98 aa).

3 helical membrane-spanning segments follow: residues 1 to 21, 29 to 49, and 61 to 81; these read MPII…GMLV, SLLC…LMAL, and IALL…LVSI.

This sequence belongs to the complex I subunit 4L family. In terms of assembly, core subunit of respiratory chain NADH dehydrogenase (Complex I) which is composed of 45 different subunits.

The protein localises to the mitochondrion inner membrane. It carries out the reaction a ubiquinone + NADH + 5 H(+)(in) = a ubiquinol + NAD(+) + 4 H(+)(out). In terms of biological role, core subunit of the mitochondrial membrane respiratory chain NADH dehydrogenase (Complex I) which catalyzes electron transfer from NADH through the respiratory chain, using ubiquinone as an electron acceptor. Part of the enzyme membrane arm which is embedded in the lipid bilayer and involved in proton translocation. The chain is NADH-ubiquinone oxidoreductase chain 4L (MT-ND4L) from Piliocolobus badius (Western red colobus).